The following is a 61-amino-acid chain: Metallothionein-1E (61 aa).

M1 is subject to N-acetylmethionine. Residues 1 to 29 (MDPNCSCPTGGSCSCAGSCTCKACRCTSC) form a beta region. The a divalent metal cation site is built by C5, C7, C13, C15, C19, C21, C24, C26, C29, C33, C34, C36, C37, C41, C44, C48, C50, C57, C59, and C60. Residues 30 to 61 (KKSCCSCCPVGCAKCAQGCICKGASDKCSCCA) form an alpha region.

Belongs to the metallothionein superfamily. Type 1 family. In terms of assembly, monomer.

In terms of biological role, metallothioneins have a high content of cysteine residues that bind various heavy metals; these proteins are transcriptionally regulated by both heavy metals and glucocorticoids. The sequence is that of Metallothionein-1E (MT1E) from Sus scrofa (Pig).